A 45-amino-acid chain; its full sequence is Photosystem II reaction center protein K (45 aa).

Positions 1–8 (MFSINFLG) are excised as a propeptide. Residues 17–37 (FDPIVDVLPIIPLLFLLLAFV) form a helical membrane-spanning segment.

Belongs to the PsbK family. As to quaternary structure, PSII is composed of 1 copy each of membrane proteins PsbA, PsbB, PsbC, PsbD, PsbE, PsbF, PsbH, PsbI, PsbJ, PsbK, PsbL, PsbM, PsbT, PsbY, PsbZ, Psb30/Ycf12, at least 3 peripheral proteins of the oxygen-evolving complex and a large number of cofactors. It forms dimeric complexes.

It localises to the plastid. The protein localises to the chloroplast thylakoid membrane. Its function is as follows. One of the components of the core complex of photosystem II (PSII). PSII is a light-driven water:plastoquinone oxidoreductase that uses light energy to abstract electrons from H(2)O, generating O(2) and a proton gradient subsequently used for ATP formation. It consists of a core antenna complex that captures photons, and an electron transfer chain that converts photonic excitation into a charge separation. The protein is Photosystem II reaction center protein K of Euglena viridis (Cercaria viridis).